The sequence spans 364 residues: Paraneoplastic antigen Ma2 homolog (364 aa).

Ala2 carries the N-acetylalanine modification. The span at 335 to 353 shows a compositional bias: acidic residues; that stretch reads EEEEASFENESIEEPEEGD. A disordered region spans residues 335 to 364; that stretch reads EEEEASFENESIEEPEEGDGYGRWNHEGDD.

It belongs to the PNMA family.

Its subcellular location is the nucleus. It is found in the nucleolus. This is Paraneoplastic antigen Ma2 homolog (PNMA2) from Pongo abelii (Sumatran orangutan).